The primary structure comprises 267 residues: MEIKVLAKRKVSAKRANEILGKFILERKANEENRLFLSGNATPTEDLFQIVSNSLNKFQNHLNESINPELALTENNNNNNTTNGDSSDEALIPMSDDQPNPLKDSSNTLQIDDGDVSERYSDSVSSSTTTTIITNNKKINNNNNNKSKDIDSSNSTESENEKSVQKSKKEKESPKKLTKSKKSKKQESSDESSSESSSSSSSSSSSESSSSESESSSSSEDEKKKKKKKSSSTSSKKSSSKKRKVESSDDSDSSSSEEEKKKKKKKK.

Residues Leu-72–Lys-267 are disordered. A compositionally biased stretch (low complexity) spans Asp-122–Asn-145. Residues Glu-159–Lys-175 show a composition bias toward basic and acidic residues. Positions Ser-194–Ser-218 are enriched in low complexity.

This is an uncharacterized protein from Dictyostelium discoideum (Social amoeba).